Reading from the N-terminus, the 117-residue chain is Large ribosomal subunit protein uL18 (117 aa).

This sequence belongs to the universal ribosomal protein uL18 family. Part of the 50S ribosomal subunit; part of the 5S rRNA/L5/L18/L25 subcomplex. Contacts the 5S and 23S rRNAs.

Functionally, this is one of the proteins that bind and probably mediate the attachment of the 5S RNA into the large ribosomal subunit, where it forms part of the central protuberance. The sequence is that of Large ribosomal subunit protein uL18 from Francisella tularensis subsp. novicida (strain U112).